Here is an 85-residue protein sequence, read N- to C-terminus: Large ribosomal subunit protein bL27 (85 aa).

Positions 1 to 20 (MATKKAGGSTRNGRDSEAKR) are disordered.

It belongs to the bacterial ribosomal protein bL27 family.

The sequence is that of Large ribosomal subunit protein bL27 from Haemophilus influenzae (strain PittEE).